Here is a 379-residue protein sequence, read N- to C-terminus: Oxidoreductase chry3 (379 aa).

2 disordered regions span residues 1-23 (MTTA…QPTP) and 126-150 (EGDD…TSHM). Over residues 126–138 (EGDDSAPAEEEAD) the composition is skewed to acidic residues.

This sequence belongs to the asaB hydroxylase/desaturase family.

Its pathway is pigment biosynthesis. Oxidoreductase; part of the gene cluster that mediates the biosynthesis of the yellow pigment chrysogine. Pyruvic acid and anthranilic acid are likely substrates for the nonribosomal peptide synthetase chry1/NRPS14, with pyruvic acid adenylated by the first A domain and anthranilic acid by the second. If pyruvic acid and anthranilic acid are merged and released from chry1/NRPS14 by hydrolysis, a subsequent amidation would lead to 2-pyruvoylaminobenzamide. This process is probably catalyzed by the amidotransferase chry2 using glutamine as amino donor. The dehydrogenase chry5 that has a terminal berberine bridge domain for C-N cyclization could catalyze the cyclization of 2-pyruvoylaminobenzamide to yield acetyl-4(3H)-quinazolidinone. A final reduction of acetyl-4(3H)-quinazolidinone catalyzed by the oxidoreductase chry4 would result in chrysogine. The chain is Oxidoreductase chry3 from Gibberella zeae (strain ATCC MYA-4620 / CBS 123657 / FGSC 9075 / NRRL 31084 / PH-1) (Wheat head blight fungus).